The following is a 125-amino-acid chain: Small ribosomal subunit protein uS12 (125 aa).

Asp89 is subject to 3-methylthioaspartic acid.

The protein belongs to the universal ribosomal protein uS12 family. In terms of assembly, part of the 30S ribosomal subunit. Contacts proteins S8 and S17. May interact with IF1 in the 30S initiation complex.

Functionally, with S4 and S5 plays an important role in translational accuracy. In terms of biological role, interacts with and stabilizes bases of the 16S rRNA that are involved in tRNA selection in the A site and with the mRNA backbone. Located at the interface of the 30S and 50S subunits, it traverses the body of the 30S subunit contacting proteins on the other side and probably holding the rRNA structure together. The combined cluster of proteins S8, S12 and S17 appears to hold together the shoulder and platform of the 30S subunit. The chain is Small ribosomal subunit protein uS12 from Clostridium botulinum (strain Alaska E43 / Type E3).